The primary structure comprises 98 residues: Small ribosomal subunit protein uS19 (98 aa).

Residues 77 to 98 (TRTFRGHAGGKAEKGGSAPKKK) form a disordered region.

Belongs to the universal ribosomal protein uS19 family.

Protein S19 forms a complex with S13 that binds strongly to the 16S ribosomal RNA. The sequence is that of Small ribosomal subunit protein uS19 from Chlorobium phaeobacteroides (strain DSM 266 / SMG 266 / 2430).